The chain runs to 445 residues: Proton extrusion protein PxcA (445 aa).

The next 4 helical transmembrane spans lie at 227-247 (FILL…TFLI), 322-342 (AIAN…VVAF), 369-389 (LIIL…WEVI), and 405-425 (FNFL…KYWI).

This sequence belongs to the CemA family.

The protein localises to the cell inner membrane. In terms of biological role, required for H(+) efflux immediately after light irradiation to form a rapid H(+) concentration gradient across the thylakoid membranes. Together with PxcL, contributes to transient H(+) uptake following dark to light transition. This Microcystis aeruginosa (strain NIES-843 / IAM M-2473) protein is Proton extrusion protein PxcA.